The sequence spans 118 residues: uncharacterized protein (118 aa).

This is an uncharacterized protein from Escherichia coli (strain K12).